The primary structure comprises 152 residues: Ribosome maturation factor RimP (152 aa).

Belongs to the RimP family.

Its subcellular location is the cytoplasm. Functionally, required for maturation of 30S ribosomal subunits. The chain is Ribosome maturation factor RimP from Alkalilimnicola ehrlichii (strain ATCC BAA-1101 / DSM 17681 / MLHE-1).